Here is a 247-residue protein sequence, read N- to C-terminus: tRNA uridine(34) hydroxylase (247 aa).

One can recognise a Rhodanese domain in the interval threonine 124–asparagine 218. Cysteine 178 serves as the catalytic Cysteine persulfide intermediate.

This sequence belongs to the TrhO family.

The catalysed reaction is uridine(34) in tRNA + AH2 + O2 = 5-hydroxyuridine(34) in tRNA + A + H2O. Catalyzes oxygen-dependent 5-hydroxyuridine (ho5U) modification at position 34 in tRNAs. The chain is tRNA uridine(34) hydroxylase from Rickettsia conorii (strain ATCC VR-613 / Malish 7).